The chain runs to 177 residues: Large ribosomal subunit protein uL6 (177 aa).

This sequence belongs to the universal ribosomal protein uL6 family. As to quaternary structure, part of the 50S ribosomal subunit.

In terms of biological role, this protein binds to the 23S rRNA, and is important in its secondary structure. It is located near the subunit interface in the base of the L7/L12 stalk, and near the tRNA binding site of the peptidyltransferase center. This Latilactobacillus sakei subsp. sakei (strain 23K) (Lactobacillus sakei subsp. sakei) protein is Large ribosomal subunit protein uL6.